The primary structure comprises 249 residues: Putative ABC transporter ATP-binding protein GSU1281 (249 aa).

The ABC transporter domain occupies 6–236; that stretch reads VEVRDLCHCY…DELLATCRLE (231 aa). 39-46 contributes to the ATP binding site; the sequence is GANGAGKS.

It belongs to the ABC transporter superfamily.

The protein resides in the cell inner membrane. In terms of biological role, probably part of an ABC transporter complex. Responsible for energy coupling to the transport system. In Geobacter sulfurreducens (strain ATCC 51573 / DSM 12127 / PCA), this protein is Putative ABC transporter ATP-binding protein GSU1281.